A 493-amino-acid polypeptide reads, in one-letter code: Dipeptide permease D (493 aa).

13 helical membrane-spanning segments follow: residues 14–34 (VVAL…LLIL), 49–69 (ELFS…GYLA), 91–111 (LVLG…AIIV), 138–158 (GGFS…PIAC), 167–187 (WAMG…IFLC), 212–232 (NWGW…VLFW), 235–255 (WSVY…AKIY), 267–287 (LGLI…AQQG), 312–332 (MFQS…AWLV), 344–364 (IWGK…ILTL), 379–399 (LMVL…PVAM), 413–433 (VLTG…AGVI), and 458–478 (VFEQ…LIWL).

This sequence belongs to the major facilitator superfamily. Proton-dependent oligopeptide transporter (POT/PTR) (TC 2.A.17) family. DtpD subfamily.

The protein resides in the cell inner membrane. In terms of biological role, probable proton-dependent permease that transports dipeptides. The sequence is that of Dipeptide permease D from Salmonella paratyphi C (strain RKS4594).